A 578-amino-acid chain; its full sequence is A-type ATP synthase subunit A (578 aa).

An ATP-binding site is contributed by 228–235 (GPFGSGKT).

This sequence belongs to the ATPase alpha/beta chains family. As to quaternary structure, has multiple subunits with at least A(3), B(3), C, D, E, F, H, I and proteolipid K(x).

The protein resides in the cell membrane. It catalyses the reaction ATP + H2O + 4 H(+)(in) = ADP + phosphate + 5 H(+)(out). Functionally, component of the A-type ATP synthase that produces ATP from ADP in the presence of a proton gradient across the membrane. The A chain is the catalytic subunit. This chain is A-type ATP synthase subunit A, found in Methanosarcina acetivorans (strain ATCC 35395 / DSM 2834 / JCM 12185 / C2A).